Reading from the N-terminus, the 550-residue chain is Beta-cubebene synthase (550 aa).

Residues D303, D307, D447, and E455 each coordinate Mg(2+). The short motif at 303-307 (DDTYD) is the DDXXD motif element.

The protein belongs to the terpene synthase family. Tpsa subfamily. The cofactor is Mg(2+). As to expression, expressed in young developing leaves and in stamens. Not detected in tepals and carpels.

It carries out the reaction (2E,6E)-farnesyl diphosphate = beta-cubebene + diphosphate. It functions in the pathway secondary metabolite biosynthesis; terpenoid biosynthesis. Functionally, sesquiterpene synthase converting farnesyl diphosphate into beta-cubebene (24.5%), alpha-muurolene (19.3%), delta-cadinol (18.6%), delta-elemene (16.0%), tau-muurolene (10.8%), and beta-elemene (10.8%). No activity with geranyl diphosphate or geranylgeranyl diphosphate. This is Beta-cubebene synthase from Magnolia grandiflora (Southern magnolia).